Here is a 631-residue protein sequence, read N- to C-terminus: Probable electron transfer flavoprotein-ubiquinone oxidoreductase, mitochondrial (631 aa).

Residue 65–79 (VCIVGGGPAGLATAI) participates in FAD binding. Residues cysteine 574, cysteine 600, cysteine 603, and cysteine 606 each contribute to the [4Fe-4S] cluster site. One can recognise a 4Fe-4S ferredoxin-type domain in the interval 591–620 (TRLQINSQNCIHCKTCDIKAPRQDITWKVP).

The protein belongs to the ETF-QO/FixC family. [4Fe-4S] cluster serves as cofactor. FAD is required as a cofactor.

Its subcellular location is the mitochondrion inner membrane. The enzyme catalyses a ubiquinone + reduced [electron-transfer flavoprotein] = a ubiquinol + oxidized [electron-transfer flavoprotein] + H(+). Functionally, accepts electrons from ETF and reduces ubiquinone. This chain is Probable electron transfer flavoprotein-ubiquinone oxidoreductase, mitochondrial (CIR2), found in Saccharomyces cerevisiae (strain ATCC 204508 / S288c) (Baker's yeast).